The sequence spans 560 residues: DNA ligase B (560 aa).

Residue lysine 124 is the N6-AMP-lysine intermediate of the active site.

This sequence belongs to the NAD-dependent DNA ligase family. LigB subfamily.

It catalyses the reaction NAD(+) + (deoxyribonucleotide)n-3'-hydroxyl + 5'-phospho-(deoxyribonucleotide)m = (deoxyribonucleotide)n+m + AMP + beta-nicotinamide D-nucleotide.. In terms of biological role, catalyzes the formation of phosphodiester linkages between 5'-phosphoryl and 3'-hydroxyl groups in double-stranded DNA using NAD as a coenzyme and as the energy source for the reaction. This Escherichia coli O157:H7 protein is DNA ligase B.